The chain runs to 317 residues: MKIKLIDSVVRSFKVAKIFRENTDKINAIDFAPNGEHLISCSEDDQIVIYDCEKGTQSRTVNSKKYGVDLIHFTHANNTAIHSSTKVDDTIRYLSLHDNKYLRYFPGHTKKVISLCISPVEDTFLSGSLDKTLRLWDLRSPNCQGLMHLSGRPIAAYDPEGLIFAAGVNSESIKLYDLRSFDKGPFVTFKLNQEKECDWTGLKFSRDGKTILISTNGSVIRLVDAFHGTPLQTFTGYPNNKGIPIEASFSPDSQFIFSGSTDGRVHIWNADTGNKVSVLNGDHPGPVQCVQFNPKYMMLASACTNMAFWLPTSEEGL.

6 WD repeats span residues 21-60, 107-146, 148-186, 194-233, 238-278, and 282-317; these read ENTD…QSRT, GHTK…CQGL, HLSG…KGPF, EKEC…PLQT, PNNK…KVSV, and DHPG…EEGL.

This sequence belongs to the WD repeat SWD2 family. Component of the SET1 complex, composed at least of the catalytic subunit Set1, wds/WDR5, Wdr82, Rbbp5, ash2, Cfp1/CXXC1, hcf and Dpy-30L1. Interacts with male-specific lethal (MSL) histone acetyltransferase complex at least composed of mof, msl-1, msl-2 and msl-3. Interacts with su(sable).

The protein resides in the nucleus. Functionally, component of the SET1 complex that specifically di- and trimethylates 'Lys-4' of histone H3. Together with su(sable), part of a transcription termination checkpoint that promotes transcription termination of aberrant RNAs and their subsequent degradation by the nuclear exosome. The sequence is that of WD repeat-containing protein 82 from Drosophila melanogaster (Fruit fly).